The chain runs to 147 residues: Hemoglobin subunit delta (147 aa).

In terms of domain architecture, Globin spans 3–147; that stretch reads HLTPEEKALV…VANALAHKYH (145 aa). Ser51 carries the post-translational modification Phosphoserine. Residues His64 and His93 each coordinate heme b.

The protein belongs to the globin family. As to quaternary structure, heterotetramer of two delta chains and two alpha chains. In terms of tissue distribution, red blood cells.

In Trichechus manatus (Caribbean manatee), this protein is Hemoglobin subunit delta (HBD).